The primary structure comprises 337 residues: DNA-directed RNA polymerase subunit alpha (337 aa).

Residues 1-233 are alpha N-terminal domain (alpha-NTD); sequence MVREKVRVST…DLFIPFLHAE (233 aa). Residues 267–337 form an alpha C-terminal domain (alpha-CTD) region; it reads IALKSIFIDQ…KAFHNPFTEE (71 aa).

The protein belongs to the RNA polymerase alpha chain family. In plastids the minimal PEP RNA polymerase catalytic core is composed of four subunits: alpha, beta, beta', and beta''. When a (nuclear-encoded) sigma factor is associated with the core the holoenzyme is formed, which can initiate transcription.

The protein localises to the plastid. Its subcellular location is the chloroplast. The catalysed reaction is RNA(n) + a ribonucleoside 5'-triphosphate = RNA(n+1) + diphosphate. Its function is as follows. DNA-dependent RNA polymerase catalyzes the transcription of DNA into RNA using the four ribonucleoside triphosphates as substrates. The sequence is that of DNA-directed RNA polymerase subunit alpha from Eucalyptus globulus subsp. globulus (Tasmanian blue gum).